Here is a 1475-residue protein sequence, read N- to C-terminus: Amylopullulanase (1475 aa).

The N-terminal stretch at 1 to 31 is a signal peptide; the sequence is MFKRRALGFLLAFLLVFTAVFGSMPMEFAKA. Positions 245, 247, 285, 340, 398, 400, 403, 404, 449, and 451 each coordinate Ca(2+). Substrate is bound by residues H524 and R627. Residue D629 is the Nucleophile of the active site. E658 (proton donor) is an active-site residue. Substrate contacts are provided by residues 734 to 735, D794, and R798; that span reads HD. Fibronectin type-III domains lie at 928 to 1019 and 1164 to 1257; these read APQP…PAFP and TPTA…TPDI. Residues 1255–1362 enclose the CBM20 domain; sequence PDIIPIKVTF…VNDTVQRWRD (108 aa).

This sequence belongs to the glycosyl hydrolase 13 family. Ca(2+) is required as a cofactor.

The enzyme catalyses Endohydrolysis of (1-&gt;4)-alpha-D-glucosidic linkages in polysaccharides containing three or more (1-&gt;4)-alpha-linked D-glucose units.. It catalyses the reaction Hydrolysis of (1-&gt;6)-alpha-D-glucosidic linkages in pullulan, amylopectin and glycogen, and in the alpha- and beta-limit dextrins of amylopectin and glycogen.. This Thermoanaerobacter thermohydrosulfuricus (Clostridium thermohydrosulfuricum) protein is Amylopullulanase (apu).